Consider the following 182-residue polypeptide: Large ribosomal subunit protein uL5c (182 aa).

It belongs to the universal ribosomal protein uL5 family. As to quaternary structure, part of the 50S ribosomal subunit; contacts the 5S rRNA.

Its subcellular location is the plastid. The protein localises to the chloroplast. In terms of biological role, binds 5S rRNA, forms part of the central protuberance of the 50S subunit. The polypeptide is Large ribosomal subunit protein uL5c (rpl5) (Cyanidium caldarium (Red alga)).